Consider the following 49-residue polypeptide: MAVKDYYKVQGDSVTRIKQFCPRCGPGTFLADHKNRLTCGKCGYTEFKK.

Cys21, Cys24, Cys39, and Cys42 together coordinate Zn(2+). The C4-type zinc-finger motif lies at 21–42 (CPRCGPGTFLADHKNRLTCGKC).

This sequence belongs to the eukaryotic ribosomal protein eS31 family. Part of the 30S ribosomal subunit. Zn(2+) serves as cofactor.

The protein is Small ribosomal subunit protein eS31 of Methanosarcina barkeri (strain Fusaro / DSM 804).